Here is a 976-residue protein sequence, read N- to C-terminus: Leucine--tRNA ligase (976 aa).

The span at Met1 to Val23 shows a compositional bias: low complexity. The tract at residues Met1–Arg34 is disordered. The 'HIGH' region motif lies at Pro86 to His97. The 'KMSKS' region motif lies at Lys745–Ser749. Lys748 serves as a coordination point for ATP.

The protein belongs to the class-I aminoacyl-tRNA synthetase family.

The protein localises to the cytoplasm. The catalysed reaction is tRNA(Leu) + L-leucine + ATP = L-leucyl-tRNA(Leu) + AMP + diphosphate. The protein is Leucine--tRNA ligase of Mycobacterium ulcerans (strain Agy99).